A 193-amino-acid chain; its full sequence is ATP-dependent Clp protease proteolytic subunit 1 (193 aa).

The Nucleophile role is filled by Ser99. His124 is an active-site residue.

It belongs to the peptidase S14 family. In terms of assembly, fourteen ClpP subunits assemble into 2 heptameric rings which stack back to back to give a disk-like structure with a central cavity, resembling the structure of eukaryotic proteasomes.

The protein localises to the cytoplasm. The catalysed reaction is Hydrolysis of proteins to small peptides in the presence of ATP and magnesium. alpha-casein is the usual test substrate. In the absence of ATP, only oligopeptides shorter than five residues are hydrolyzed (such as succinyl-Leu-Tyr-|-NHMec, and Leu-Tyr-Leu-|-Tyr-Trp, in which cleavage of the -Tyr-|-Leu- and -Tyr-|-Trp bonds also occurs).. Cleaves peptides in various proteins in a process that requires ATP hydrolysis. Has a chymotrypsin-like activity. Plays a major role in the degradation of misfolded proteins. The sequence is that of ATP-dependent Clp protease proteolytic subunit 1 from Shouchella clausii (strain KSM-K16) (Alkalihalobacillus clausii).